The following is an 88-amino-acid chain: Cell division topological specificity factor (88 aa).

The protein belongs to the MinE family.

Functionally, prevents the cell division inhibition by proteins MinC and MinD at internal division sites while permitting inhibition at polar sites. This ensures cell division at the proper site by restricting the formation of a division septum at the midpoint of the long axis of the cell. This Cronobacter sakazakii (strain ATCC BAA-894) (Enterobacter sakazakii) protein is Cell division topological specificity factor.